We begin with the raw amino-acid sequence, 377 residues long: tRNA-splicing endonuclease subunit SEN2 (377 aa).

Positions 119–174 (ETEMTLEKVTQQRRLQRLEFKKERAKLERELLELRKKGGHIDEENILLEKQRESLR) form a coiled coil. Residues Tyr289, His297, and Lys328 contribute to the active site.

The protein belongs to the tRNA-intron endonuclease family. Heterotetramer composed of SEN2, SEN15, SEN34 and SEN54. Interacts directly with SEN54.

The protein localises to the nucleus. The protein resides in the endomembrane system. It is found in the mitochondrion outer membrane. It carries out the reaction pretRNA = a 3'-half-tRNA molecule with a 5'-OH end + a 5'-half-tRNA molecule with a 2',3'-cyclic phosphate end + an intron with a 2',3'-cyclic phosphate and a 5'-hydroxyl terminus.. Constitutes one of the two catalytic subunit of the tRNA-splicing endonuclease complex, a complex responsible for identification and cleavage of the splice sites in pre-tRNA. It cleaves pre-tRNA at the 5'- and 3'-splice sites to release the intron. The products are an intron and two tRNA half-molecules bearing 2',3'-cyclic phosphate and 5'-OH termini. There are no conserved sequences at the splice sites, but the intron is invariably located at the same site in the gene, placing the splice sites an invariant distance from the constant structural features of the tRNA body. This subunit may anchor the endonuclease complex to the nuclear membrane. Probably carries the active site for 5'-splice site cleavage. This is tRNA-splicing endonuclease subunit SEN2 (SEN2) from Saccharomyces cerevisiae (strain ATCC 204508 / S288c) (Baker's yeast).